Here is a 671-residue protein sequence, read N- to C-terminus: DNA ligase (671 aa).

NAD(+) contacts are provided by residues 32 to 36, 81 to 82, and Glu-113; these read DAEYD and SL. Residue Lys-115 is the N6-AMP-lysine intermediate of the active site. Arg-136, Glu-173, Lys-290, and Lys-314 together coordinate NAD(+). Zn(2+)-binding residues include Cys-408, Cys-411, Cys-426, and Cys-432. In terms of domain architecture, BRCT spans 593 to 671; it reads EIDSPFAGKT…EAEMLRLLGS (79 aa).

Belongs to the NAD-dependent DNA ligase family. LigA subfamily. It depends on Mg(2+) as a cofactor. Requires Mn(2+) as cofactor.

The enzyme catalyses NAD(+) + (deoxyribonucleotide)n-3'-hydroxyl + 5'-phospho-(deoxyribonucleotide)m = (deoxyribonucleotide)n+m + AMP + beta-nicotinamide D-nucleotide.. Its function is as follows. DNA ligase that catalyzes the formation of phosphodiester linkages between 5'-phosphoryl and 3'-hydroxyl groups in double-stranded DNA using NAD as a coenzyme and as the energy source for the reaction. It is essential for DNA replication and repair of damaged DNA. This chain is DNA ligase, found in Escherichia coli O157:H7.